A 595-amino-acid chain; its full sequence is NADH-quinone oxidoreductase subunit C/D (595 aa).

The tract at residues 1–185 is NADH dehydrogenase I subunit C; it reads MNKNICLSAS…NPFVLTKEKE (185 aa). The tract at residues 209–595 is NADH dehydrogenase I subunit D; it reads DFMFLNFGPN…IDFVMSDVDR (387 aa).

It in the N-terminal section; belongs to the complex I 30 kDa subunit family. This sequence in the C-terminal section; belongs to the complex I 49 kDa subunit family. NDH-1 is composed of 13 different subunits. Subunits NuoB, CD, E, F, and G constitute the peripheral sector of the complex.

Its subcellular location is the cell inner membrane. The catalysed reaction is a quinone + NADH + 5 H(+)(in) = a quinol + NAD(+) + 4 H(+)(out). Its function is as follows. NDH-1 shuttles electrons from NADH, via FMN and iron-sulfur (Fe-S) centers, to quinones in the respiratory chain. The immediate electron acceptor for the enzyme in this species is believed to be ubiquinone. Couples the redox reaction to proton translocation (for every two electrons transferred, four hydrogen ions are translocated across the cytoplasmic membrane), and thus conserves the redox energy in a proton gradient. The chain is NADH-quinone oxidoreductase subunit C/D from Baumannia cicadellinicola subsp. Homalodisca coagulata.